The following is a 320-amino-acid chain: Ferrochelatase (320 aa).

Positions 194 and 272 each coordinate Fe cation.

It belongs to the ferrochelatase family.

The protein localises to the cytoplasm. It carries out the reaction heme b + 2 H(+) = protoporphyrin IX + Fe(2+). It functions in the pathway porphyrin-containing compound metabolism; protoheme biosynthesis; protoheme from protoporphyrin-IX: step 1/1. Its function is as follows. Catalyzes the ferrous insertion into protoporphyrin IX. This chain is Ferrochelatase, found in Desulfotalea psychrophila (strain LSv54 / DSM 12343).